The sequence spans 129 residues: Large ribosomal subunit protein bL12 (129 aa).

The protein belongs to the bacterial ribosomal protein bL12 family. As to quaternary structure, homodimer. Part of the ribosomal stalk of the 50S ribosomal subunit. Forms a multimeric L10(L12)X complex, where L10 forms an elongated spine to which 2 to 4 L12 dimers bind in a sequential fashion. Binds GTP-bound translation factors.

Its function is as follows. Forms part of the ribosomal stalk which helps the ribosome interact with GTP-bound translation factors. Is thus essential for accurate translation. The protein is Large ribosomal subunit protein bL12 of Protochlamydia amoebophila (strain UWE25).